The primary structure comprises 480 residues: Iron-sulfur cluster assembly SufBD family protein slr0074 (480 aa).

The protein belongs to the iron-sulfur cluster assembly SufBD family.

This chain is Iron-sulfur cluster assembly SufBD family protein slr0074, found in Synechocystis sp. (strain ATCC 27184 / PCC 6803 / Kazusa).